Here is a 647-residue protein sequence, read N- to C-terminus: Threonine--tRNA ligase (647 aa).

One can recognise a TGS domain in the interval 1–61; that stretch reads MIKITFPDGA…EEDGSIEIVT (61 aa). The interval 240-538 is catalytic; sequence DHRKLGKELD…LIETYKGAFP (299 aa). Positions 334, 385, and 515 each coordinate Zn(2+).

Belongs to the class-II aminoacyl-tRNA synthetase family. As to quaternary structure, homodimer. Requires Zn(2+) as cofactor.

The protein resides in the cytoplasm. It catalyses the reaction tRNA(Thr) + L-threonine + ATP = L-threonyl-tRNA(Thr) + AMP + diphosphate + H(+). In terms of biological role, catalyzes the attachment of threonine to tRNA(Thr) in a two-step reaction: L-threonine is first activated by ATP to form Thr-AMP and then transferred to the acceptor end of tRNA(Thr). Also edits incorrectly charged L-seryl-tRNA(Thr). The polypeptide is Threonine--tRNA ligase (Streptococcus pyogenes serotype M49 (strain NZ131)).